The primary structure comprises 841 residues: mRNA export factor ICP27 homolog (841 aa).

Disordered regions lie at residues 12–82 (PFAG…QYDK) and 115–163 (RAQG…TSPD). Positions 32-49 (YSQQQSQHYYYGHNQSSY) are enriched in low complexity. The segment covering 66–79 (MPPPLSSPSSPPPQ) has biased composition (pro residues). Low complexity predominate over residues 132–147 (SSLVSSNNSNNNTTLS). Zn(2+) contacts are provided by C298, H411, C413, and C418. Residues 298–418 (CLLDSPGGGG…PGHRCQNEIC (121 aa)) form a CHC2-type zinc finger. Disordered stretches follow at residues 444-749 (HPNG…DDLH) and 774-811 (SVTP…TDQP). The span at 495–507 (VDSRGGGGDRRGD) shows a compositional bias: basic and acidic residues. Over residues 514–526 (NHHRHHTRRARTR) the composition is skewed to basic residues. The span at 553 to 563 (RRGEAQRESNG) shows a compositional bias: basic and acidic residues. Low complexity-rich tracts occupy residues 568–579 (KSPSTVSSTTVH) and 591–603 (SRKS…QPET). Positions 614-623 (MPPPPSPCSP) are enriched in pro residues. Residues 641-657 (RPHDPPSGEPADAEKEL) show a composition bias toward basic and acidic residues. Positions 688-699 (DSSSSSSDSSSS) are enriched in low complexity. Residues 708 to 731 (EDCRELDLQSKRLEEALEERCERD) are compositionally biased toward basic and acidic residues. Composition is skewed to acidic residues over residues 732–749 (FEAD…DDLH) and 793–809 (DAEE…DETD).

It belongs to the HHV-1 ICP27 protein family.

The protein localises to the virion tegument. The protein resides in the virion. It localises to the host nucleus. Its subcellular location is the host cytoplasm. Functionally, immediate early (EI) protein that plays many roles during productive infection including regulation of viral gene expression and nuclear export of intronless viral RNAs. The chain is mRNA export factor ICP27 homolog from Mus musculus (Mouse).